The chain runs to 510 residues: Aspartate kinase FUB3 (510 aa).

ACT domains are found at residues 372-440 (ILSN…VLPD) and 446-510 (LVGA…KNAM).

This sequence belongs to the aspartokinase family.

It catalyses the reaction L-aspartate + ATP = 4-phospho-L-aspartate + ADP. It functions in the pathway mycotoxin biosynthesis. Its function is as follows. Aspartate kinase; part of the gene cluster that mediates the biosynthesis of fusaric acid, a mycotoxin with low to moderate toxicity to animals and humans, but with high phytotoxic properties. L-aspartate is suggested as fusaric acid amino acid precursor that is activated and further processed to O-acetyl-L-homoserine by cluster enzymes aspartate kinase FUB3 and homoserine O-acetyltransferase FUB5, as well as enzymes of the primary metabolism. The polyketide synthase (PKS) FUB1 generates the triketide trans-2-hexenal which is presumptively released by the hydrolase FUB4 and linked to the NRPS-bound amino acid precursor by NAD(P)-dependent dehydrogenase FUB6. FUB1, FUB4, and the non-canonical NRPS Fub8 may form an enzyme complex. Further processing of the NRPS-bound intermediate might be carried out by FUB6 and the sulfhydrylase FUB7, enabling a spontaneous electrocyclization to close the carbon backbone of fusaric acid. Dihydrofusaric acid is likely to be released via reduction by the thioester reductase (TR) domain of FUB8 whereupon the final oxidation to fusaric acid may (also) be performed by the FMN-dependent dehydrogenase FUB9. The chain is Aspartate kinase FUB3 from Gibberella moniliformis (strain M3125 / FGSC 7600) (Maize ear and stalk rot fungus).